Consider the following 643-residue polypeptide: uncharacterized protein (643 aa).

Residues 561 to 643 form a disordered region; the sequence is LNQELETSSE…GADRKKRGVY (83 aa). Residues 591-606 are compositionally biased toward gly residues; it reads SRGGRGGRGARGGNRG. The segment covering 617–635 has biased composition (basic and acidic residues); the sequence is GHDRQMKEKHKSDIKQRGA.

This is an uncharacterized protein from Caenorhabditis elegans.